Here is a 342-residue protein sequence, read N- to C-terminus: Ribosomal RNA small subunit methyltransferase C (342 aa).

The protein belongs to the methyltransferase superfamily. RsmC family. In terms of assembly, monomer.

It is found in the cytoplasm. The catalysed reaction is guanosine(1207) in 16S rRNA + S-adenosyl-L-methionine = N(2)-methylguanosine(1207) in 16S rRNA + S-adenosyl-L-homocysteine + H(+). Its function is as follows. Specifically methylates the guanine in position 1207 of 16S rRNA in the 30S particle. This Salmonella typhi protein is Ribosomal RNA small subunit methyltransferase C.